The following is a 470-amino-acid chain: Nucleoporin NUP49 (470 aa).

Polar residues predominate over residues 1–13 (MSLFGTNTTSQTP). The disordered stretch occupies residues 1 to 92 (MSLFGTNTTS…STTTTTSQPQ (92 aa)). GLFG repeat units follow at residues 17-20 (GLFG), 45-48 (GLFG), 63-66 (GLFG), 79-82 (GLFG), 96-99 (GLFG), 111-114 (GLFG), 127-130 (GLFG), 142-145 (GLFG), 156-159 (GLFG), 168-171 (GLFG), 181-184 (GLFG), and 193-197 (GLFGQ). A compositionally biased stretch (low complexity) spans 20 to 31 (GTTTSQSAQTGS). Residues 32 to 74 (LFGTATSQPQQTGGLFGSTATQTPSSQLQSTGLFGSTTATSQP) show a composition bias toward polar residues. Over residues 75 to 92 (QQTGGLFGSTTTTTSQPQ) the composition is skewed to low complexity. The interval 196-221 (GQSTTQPQQQQNATPGLTMGQSTNTQ) is disordered. Positions 197–206 (QSTTQPQQQQ) are enriched in low complexity. Over residues 207-221 (NATPGLTMGQSTNTQ) the composition is skewed to polar residues. 2 coiled-coil regions span residues 239 to 270 (TRFN…EAVD) and 375 to 401 (FSKT…AHLT).

This sequence belongs to the nucleoporin GLFG family. As to quaternary structure, component of the nuclear pore complex (NPC). NPC constitutes the exclusive means of nucleocytoplasmic transport. NPCs allow the passive diffusion of ions and small molecules and the active, nuclear transport receptor-mediated bidirectional transport of macromolecules such as proteins, RNAs, ribonucleoparticles (RNPs), and ribosomal subunits across the nuclear envelope. Due to its 8-fold rotational symmetry, all subunits are present with 8 copies or multiples thereof.

It is found in the nucleus. Its subcellular location is the nuclear pore complex. The protein resides in the nucleus membrane. Functions as a component of the nuclear pore complex (NPC). NPC components, collectively referred to as nucleoporins (NUPs), can play the role of both NPC structural components and of docking or interaction partners for transiently associated nuclear transport factors. Active directional transport is assured by both, a Phe-Gly (FG) repeat affinity gradient for these transport factors across the NPC and a transport cofactor concentration gradient across the nuclear envelope (GSP1 and GSP2 GTPases associated predominantly with GTP in the nucleus, with GDP in the cytoplasm). NUP49 plays an important role in several nuclear transport pathways including poly(A)+ RNA, tRNA, and pre-ribosome transport. The sequence is that of Nucleoporin NUP49 (NUP49) from Chaetomium thermophilum (strain DSM 1495 / CBS 144.50 / IMI 039719) (Thermochaetoides thermophila).